A 90-amino-acid chain; its full sequence is Small ribosomal subunit protein bS16 (90 aa).

It belongs to the bacterial ribosomal protein bS16 family.

The protein is Small ribosomal subunit protein bS16 of Bacillus licheniformis (strain ATCC 14580 / DSM 13 / JCM 2505 / CCUG 7422 / NBRC 12200 / NCIMB 9375 / NCTC 10341 / NRRL NRS-1264 / Gibson 46).